A 501-amino-acid polypeptide reads, in one-letter code: DNA nucleotidylexotransferase (501 aa).

The Nuclear localization signal signature appears at 11 to 17; that stretch reads KKRKRPV. Positions 24–121 constitute a BRCT domain; sequence QVEVKFKEVT…RPVRVETRHS (98 aa). The segment at 249–253 is involved in DNA binding; it reads VGPKT. A 2'-deoxyribonucleoside 5'-triphosphate-binding positions include 324–329 and 333–336; these read GFRRGK and HDVD. Residues D334, D336, and D426 each contribute to the Mg(2+) site. 441–442 provides a ligand contact to a 2'-deoxyribonucleoside 5'-triphosphate; it reads GW.

Belongs to the DNA polymerase type-X family. Requires Mg(2+) as cofactor.

It localises to the nucleus. The catalysed reaction is DNA(n) + a 2'-deoxyribonucleoside 5'-triphosphate = DNA(n+1) + diphosphate. Functionally, template-independent DNA polymerase which catalyzes the random addition of deoxynucleoside 5'-triphosphate to the 3'-end of a DNA initiator. One of the in vivo functions of this enzyme is the addition of nucleotides at the junction (N region) of rearranged Ig heavy chain and T-cell receptor gene segments during the maturation of B- and T-cells. The polypeptide is DNA nucleotidylexotransferase (dntt) (Oncorhynchus mykiss (Rainbow trout)).